Reading from the N-terminus, the 315-residue chain is Ferrochelatase (315 aa).

Fe cation contacts are provided by His193 and Glu273.

It belongs to the ferrochelatase family.

The protein resides in the cytoplasm. It carries out the reaction heme b + 2 H(+) = protoporphyrin IX + Fe(2+). The protein operates within porphyrin-containing compound metabolism; protoheme biosynthesis; protoheme from protoporphyrin-IX: step 1/1. In terms of biological role, catalyzes the ferrous insertion into protoporphyrin IX. The polypeptide is Ferrochelatase (Wolbachia pipientis wMel).